The sequence spans 193 residues: Peptidyl-tRNA hydrolase (193 aa).

TRNA is bound at residue Y15. H20 (proton acceptor) is an active-site residue. The tRNA site is built by F65, N67, and N113.

Belongs to the PTH family. In terms of assembly, monomer.

It is found in the cytoplasm. It carries out the reaction an N-acyl-L-alpha-aminoacyl-tRNA + H2O = an N-acyl-L-amino acid + a tRNA + H(+). In terms of biological role, hydrolyzes ribosome-free peptidyl-tRNAs (with 1 or more amino acids incorporated), which drop off the ribosome during protein synthesis, or as a result of ribosome stalling. Functionally, catalyzes the release of premature peptidyl moieties from peptidyl-tRNA molecules trapped in stalled 50S ribosomal subunits, and thus maintains levels of free tRNAs and 50S ribosomes. This is Peptidyl-tRNA hydrolase from Ehrlichia ruminantium (strain Gardel).